Consider the following 465-residue polypeptide: Plasma alpha-L-fucosidase (465 aa).

The signal sequence occupies residues 1–26; the sequence is MRPQELPRLAFPLLLLLLLPPPPCPA. N-linked (GlcNAc...) asparagine glycosylation is found at Asn169 and Asn237. At Ser299 the chain carries Phosphoserine. N-linked (GlcNAc...) asparagine glycosylation occurs at Asn375.

Belongs to the glycosyl hydrolase 29 family. In terms of assembly, homotetramer.

The protein localises to the secreted. The enzyme catalyses an alpha-L-fucoside + H2O = L-fucose + an alcohol. Alpha-L-fucosidase is responsible for hydrolyzing the alpha-1,6-linked fucose joined to the reducing-end N-acetylglucosamine of the carbohydrate moieties of glycoproteins. The protein is Plasma alpha-L-fucosidase (FUCA2) of Pongo abelii (Sumatran orangutan).